Here is a 225-residue protein sequence, read N- to C-terminus: Uracil-DNA glycosylase (225 aa).

Aspartate 65 functions as the Proton acceptor in the catalytic mechanism.

The protein belongs to the uracil-DNA glycosylase (UDG) superfamily. UNG family.

It localises to the cytoplasm. It catalyses the reaction Hydrolyzes single-stranded DNA or mismatched double-stranded DNA and polynucleotides, releasing free uracil.. Functionally, excises uracil residues from the DNA which can arise as a result of misincorporation of dUMP residues by DNA polymerase or due to deamination of cytosine. This is Uracil-DNA glycosylase from Clostridium beijerinckii (strain ATCC 51743 / NCIMB 8052) (Clostridium acetobutylicum).